A 266-amino-acid polypeptide reads, in one-letter code: uncharacterized protein (266 aa).

Positions 1–22 (MGYLKRLVLYIVIMVMSVFIIG) are cleaved as a signal peptide. Cysteine 23 carries N-palmitoyl cysteine lipidation. Cysteine 23 carries the S-diacylglycerol cysteine lipid modification.

This sequence belongs to the staphylococcal tandem lipoprotein family.

It localises to the cell membrane. This is an uncharacterized protein from Staphylococcus aureus (strain USA300).